Reading from the N-terminus, the 239-residue chain is Tetraspanin-9 (239 aa).

Topologically, residues 1 to 13 (MARGCLCCLKYMM) are cytoplasmic. Residues 14 to 34 (FLFNLIFWLCGCGLLGVGIWL) traverse the membrane as a helical segment. Over 35 to 55 (SVSQGNFATFSPSFPSLSAAN) the chain is Extracellular. Residues 56–76 (LVIAIGTIVMVTGFLGCLGAI) form a helical membrane-spanning segment. Topologically, residues 77 to 85 (KENKCLLLS) are cytoplasmic. The helical transmembrane segment at 86–106 (FFIVLLVILLAELILLILFFV) threads the bilayer. Residues 107-203 (YMDKVNENAK…VKMWFDDNKH (97 aa)) are Extracellular-facing. The N-linked (GlcNAc...) asparagine glycan is linked to Asn180. The helical transmembrane segment at 204–224 (VLGTVGMCILIMQILGMAFSM) threads the bilayer. The Cytoplasmic portion of the chain corresponds to 225 to 239 (TLFQHIHRTGKKYDA).

This sequence belongs to the tetraspanin (TM4SF) family. In terms of assembly, found in a complex with GP6. Post-translationally, glycosylated. As to expression, expressed in megakaryocytes and platelets (at protein level).

It is found in the membrane. The sequence is that of Tetraspanin-9 (TSPAN9) from Homo sapiens (Human).